The primary structure comprises 215 residues: Nucleoside triphosphate pyrophosphatase (215 aa).

The Proton acceptor role is filled by Asp-80.

Belongs to the Maf family. A divalent metal cation is required as a cofactor.

Its subcellular location is the cytoplasm. It carries out the reaction a ribonucleoside 5'-triphosphate + H2O = a ribonucleoside 5'-phosphate + diphosphate + H(+). The catalysed reaction is a 2'-deoxyribonucleoside 5'-triphosphate + H2O = a 2'-deoxyribonucleoside 5'-phosphate + diphosphate + H(+). Functionally, nucleoside triphosphate pyrophosphatase. May have a dual role in cell division arrest and in preventing the incorporation of modified nucleotides into cellular nucleic acids. The polypeptide is Nucleoside triphosphate pyrophosphatase (Leifsonia xyli subsp. xyli (strain CTCB07)).